The following is a 420-amino-acid chain: MDKLIIEGGSRINGEIRISGSKNSGLPILAATLLASGPMHICNLPHLNDITTMLALLRCMGVGVTIDEKMCVEVDPTSITEFEAPYELVRTMRASILVLGPMLARFGKADVSFPGGCAIGSRPVDIHLRGLEAMGAEIEVDGGYIRAKAPNGLKGARYLMDTVTVGGTENLLMAAVLAEGTTILENAAREPEIVDLAECLIAMGAKIKGVGTDRLEIEGVKTLNGCTYEVMPDRIETGTYLVAAAATGGWVKLRDTRADILEAVLLKLEEAGAEITVGEGTIELAMHGKRPKAVSFKTAPYPAFPTDMQAQFTAMNAIAEGTSSVVETIFENRLIQVHELNRMGANIRLEGNTAIITGVEKLKAAPVMASDLRASASLVIAGMLAEGDTLVDRIYHIDRGYECIEEKLQALGVRIRRVPG.

22–23 serves as a coordination point for phosphoenolpyruvate; the sequence is KN. Residue Arg-93 coordinates UDP-N-acetyl-alpha-D-glucosamine. The Proton donor role is filled by Cys-117. The residue at position 117 (Cys-117) is a 2-(S-cysteinyl)pyruvic acid O-phosphothioketal. The UDP-N-acetyl-alpha-D-glucosamine site is built by Asp-307 and Ile-329.

Belongs to the EPSP synthase family. MurA subfamily.

The protein localises to the cytoplasm. It catalyses the reaction phosphoenolpyruvate + UDP-N-acetyl-alpha-D-glucosamine = UDP-N-acetyl-3-O-(1-carboxyvinyl)-alpha-D-glucosamine + phosphate. The protein operates within cell wall biogenesis; peptidoglycan biosynthesis. Functionally, cell wall formation. Adds enolpyruvyl to UDP-N-acetylglucosamine. This is UDP-N-acetylglucosamine 1-carboxyvinyltransferase from Saccharophagus degradans (strain 2-40 / ATCC 43961 / DSM 17024).